The primary structure comprises 689 residues: DNA topoisomerase 1 (689 aa).

The 111-residue stretch at 3–113 (DNLVIVESPA…KENRVVFNEI (111 aa)) folds into the Toprim domain. Residues glutamate 9 and aspartate 82 each contribute to the Mg(2+) site. The Topo IA-type catalytic domain occupies 129–557 (EMNLVDAQQA…FFSSFKQDVE (429 aa)). The interaction with DNA stretch occupies residues 163–168 (SAGRVQ). Residue tyrosine 298 is the O-(5'-phospho-DNA)-tyrosine intermediate of the active site. The disordered stretch occupies residues 328 to 356 (SKRKASGKQGDQDAHEAIRPSSTMRTPDD). 3 C4-type zinc fingers span residues 577 to 603 (CEIC…FPDC), 617 to 645 (CPKC…YPEC), and 658 to 681 (CPKC…CSNC).

This sequence belongs to the type IA topoisomerase family. Monomer. Requires Mg(2+) as cofactor.

The catalysed reaction is ATP-independent breakage of single-stranded DNA, followed by passage and rejoining.. In terms of biological role, releases the supercoiling and torsional tension of DNA, which is introduced during the DNA replication and transcription, by transiently cleaving and rejoining one strand of the DNA duplex. Introduces a single-strand break via transesterification at a target site in duplex DNA. The scissile phosphodiester is attacked by the catalytic tyrosine of the enzyme, resulting in the formation of a DNA-(5'-phosphotyrosyl)-enzyme intermediate and the expulsion of a 3'-OH DNA strand. The free DNA strand then undergoes passage around the unbroken strand, thus removing DNA supercoils. Finally, in the religation step, the DNA 3'-OH attacks the covalent intermediate to expel the active-site tyrosine and restore the DNA phosphodiester backbone. This Staphylococcus aureus (strain USA300) protein is DNA topoisomerase 1.